Reading from the N-terminus, the 519-residue chain is Cyclic AMP-responsive element-binding protein 3-like protein 1 (519 aa).

Residues 1-60 (MDAVLEPFPADRLFPGSSFLDLGDLNESDFLNNAHFPEHLDHFTENMEDFSNDLFSSFFD) form a required for transcriptional activation region. The Cytoplasmic segment spans residues 1-374 (MDAVLEPFPA…YKMAATQTGT (374 aa)). Residues 71-98 (LDMELDSPTPGIQAEHSYSLSGDSAPQS) are disordered. Polar residues predominate over residues 86–97 (HSYSLSGDSAPQ). A Glycyl lysine isopeptide (Lys-Gly) (interchain with G-Cter in SUMO2) cross-link involves residue lysine 184. The segment at 200-259 (DLVQMPPTPPSSHGSDSDGSQSPRSLPPSSPVRPMARSSTAISTSPLLTAPHKLQGTSGP) is disordered. The segment covering 210 to 223 (SSHGSDSDGSQSPR) has biased composition (low complexity). Over residues 236-246 (RSSTAISTSPL) the composition is skewed to polar residues. The 64-residue stretch at 290 to 353 (ALKRVRRKIK…RTLLQQLQKL (64 aa)) folds into the bZIP domain. The tract at residues 292–321 (KRVRRKIKNKISAQESRRKKKEYVECLEKK) is basic motif. The interval 332–353 (LWKKVETLENANRTLLQQLQKL) is leucine-zipper. A helical; Signal-anchor for type II membrane protein transmembrane segment spans residues 375-395 (CLMVAALCFVLVLGSLVPCLP). Positions 392 to 395 (PCLP) match the MBTPS2 recognition motif. The Lumenal segment spans residues 396 to 519 (EFSSGSQTVK…LGPNTTIKLS (124 aa)). Positions 423–426 (RSLL) match the MBTPS1 recognition motif. Positions 484–519 (EAWPKDGGNGTSPDFSHSKEWFHDRDLGPNTTIKLS) are disordered. An N-linked (GlcNAc...) asparagine glycan is attached at asparagine 492. A compositionally biased stretch (basic and acidic residues) spans 499 to 510 (SHSKEWFHDRDL). Asparagine 513 is a glycosylation site (N-linked (GlcNAc...) asparagine).

The protein belongs to the bZIP family. ATF subfamily. Interacts with SMAD4, the interaction takes place upon TGFB1 induction and SMAD4 acts as a CREB3L1 coactivator to induce the expression of genes involved in assembly of collagen extracellular matrix. Post-translationally, upon ER stress or DNA damage, translocated to the Golgi apparatus, where it is processed by regulated intramembrane proteolysis (RIP) to release the cytosol-facing N-terminal transcription factor domain. The cleavage is performed sequentially by site-1 and site-2 proteases (S1P/MBTPS1 and S2P/MBTPS2). RIP is induced by TGFB1 and ceramide. N-glycosylated. In terms of processing, ubiquitinated by HRD1/SYVN1; undergoes 'Lys-48'-linked ubiquitination, followed by rapid proteasomal degradation under normal conditions. Upon ER stress, SYVN1 E3 ubiquitin-protein ligase dissociates from its substrate, ubiquitination does not occur and CREB3L1 is stabilized. In terms of tissue distribution, expressed in several tissues, with highest levels in pancreas and prostate. Expressed at relatively lower levels in brain.

It localises to the endoplasmic reticulum membrane. The protein localises to the nucleus. Functionally, precursor of the transcription factor form (Processed cyclic AMP-responsive element-binding protein 3-like protein 1), which is embedded in the endoplasmic reticulum membrane with N-terminal DNA-binding and transcription activation domains oriented toward the cytosolic face of the membrane. In response to ER stress or DNA damage, transported to the Golgi, where it is cleaved in a site-specific manner by resident proteases S1P/MBTPS1 and S2P/MBTPS2. The released N-terminal cytosolic domain is translocated to the nucleus where it activates transcription of specific target genes involved in the cell-cycle progression inhibition. Its function is as follows. Transcription factor involved in cell type specific DNA damage and unfolded protein response (UPR). Binds the DNA consensus sequence 5'-GTGXGCXGC-3'. Plays a critical role in bone formation through the transcription of COL1A1, and possibly COL1A2, and the secretion of bone matrix proteins. Directly binds to the UPR element (UPRE)-like sequence in an osteoblast-specific COL1A1 promoter region and induces its transcription. Does not regulate COL1A1 in other tissues, such as skin. Required to protect astrocytes from ER stress-induced cell death. In astrocytes, binds to the cAMP response element (CRE) of the BiP/HSPA5 promoter and participate in its transcriptional activation. In astrocytes and osteoblasts, upon DNA damage, inhibits cell-cycle progression after G2/M phase by binding to promoters and activating transcription of genes encoding cell-cycle inhibitors, such as p21/CDKN1A. Required for TGFB1 to activate genes involved in the assembly of collagen extracellular matrix. (Microbial infection) May play a role in limiting virus spread by inhibiting proliferation of virus-infected cells. Upon infection with diverse DNA and RNA viruses, inhibits cell-cycle progression by binding to promoters and activating transcription of genes encoding cell-cycle inhibitors, such as p21/CDKN1A. The polypeptide is Cyclic AMP-responsive element-binding protein 3-like protein 1 (Homo sapiens (Human)).